The primary structure comprises 248 residues: MSGISKLSDFWVEKYKKESKKSWDKFYKRNETRFFKDRHWLDREFDCYFGLPDKLPLTILEVGCGVGNLVYPLLEVQPNLKIYCCDFSPRAIDFVKKHSCYNENRVFPFVNDITEDSLLEVLGSACIDTLTAIFVLSAIPREKQLRSIKNLASVIKPGGHLVFRDYCDGDFAQEKFMTSGDPSMIDEQTFVRQDGTLSLFFREEDIAEWMKSAGFGLVTLDRVNRTVDNRKRNLNMKRTFLQGVWKKL.

6 residues coordinate S-adenosyl-L-methionine: tryptophan 23, tyrosine 27, glycine 63, aspartate 86, aspartate 112, and isoleucine 133.

Belongs to the methyltransferase superfamily. METL family.

The protein resides in the cytoplasm. It is found in the nucleus. It carries out the reaction cytidine(32) in tRNA(Ser) + S-adenosyl-L-methionine = N(3)-methylcytidine(32) in tRNA(Ser) + S-adenosyl-L-homocysteine + H(+). Functionally, S-adenosyl-L-methionine-dependent methyltransferase that mediates N(3)-methylcytidine modification of residue 32 of the tRNA anticodon loop of tRNA(Ser). N(3)-methylcytidine methylation by trm141 requires the formation of N(6)-dimethylallyladenosine(37) (i6A37) by tit1 as prerequisite. Does not catalyze N(3)-methylcytidine modification of tRNA(Thr). The chain is tRNA N(3)-methylcytidine methyltransferase trm141 from Schizosaccharomyces pombe (strain 972 / ATCC 24843) (Fission yeast).